The sequence spans 178 residues: Riboflavin kinase (178 aa).

2 residues coordinate Mg(2+): threonine 39 and asparagine 41. The active-site Nucleophile is glutamate 116.

This sequence belongs to the flavokinase family. Zn(2+) is required as a cofactor. The cofactor is Mg(2+).

The catalysed reaction is riboflavin + ATP = FMN + ADP + H(+). The protein operates within cofactor biosynthesis; FMN biosynthesis; FMN from riboflavin (ATP route): step 1/1. In terms of biological role, catalyzes the phosphorylation of riboflavin (vitamin B2) to form flavin mononucleotide (FMN) coenzyme. This chain is Riboflavin kinase (FMN1), found in Scheffersomyces stipitis (strain ATCC 58785 / CBS 6054 / NBRC 10063 / NRRL Y-11545) (Yeast).